A 171-amino-acid chain; its full sequence is Endoribonuclease ToxN (171 aa).

This sequence belongs to the ToxN/AbiQ toxin family. In terms of assembly, one ToxN monomer binds to a 36-nt-long single repeat of the ToxI RNA; this complex forms a triangular heterohexameric complex with ToxN connected by the ToxI RNA to another toxin molecule. The ToxI repeat forms a pseudoknot which occludes the toxin active site. Interaction of ToxI with ToxN partially inhibits the latter's endoribonuclease activity in vitro. The complex self-assembles in vitro with either full-length or processed single repeats; during the process the precursor is processed.

In terms of biological role, toxic component of a type III toxin-antitoxin (TA) system. An endoribonuclease which is active independently of the ribosome, cleaving between the second and third A of AAA(U/G) sequences, although not all occurrences of this tetranucleotide are cleaved. Digests many mRNA species, including its own transcript and its cognate antitoxin RNA ToxI. ToxI has 5.5 nearly identical 36 nucleotide-long repeats (a single repeat neutralizes the toxin in vivo); a single repeat folds into a pseudoknot which binds the toxin. The ToxI precursor RNA is a preferential target in vivo and is progressively degraded to single repeat lengths as ToxN-ToxI complex self-assembly occurs. In vivo expression of ToxI antitoxin inhibits endonuclease activity of ToxN. The toxin alone inhibits growth when expressed in E.coli without causing cell lysis; this bacteriostatic effect is neutralized by cognate RNA antitoxin ToxI. Non-cognate antitoxin RNA from B.thuringiensis does not inhibit this toxin. The RNA antitoxin is less stable than the proteinaceous toxin; synthesis of ToxI in the absence of new ToxN synthesis restores growth and also detectable accumulation of the ToxN protein. Negatively regulates its own operon in complex with ToxI. The toxin-antitoxin system functions in plasmid maintenance (a plasmid addiction system). Functionally, the TA system protects P.atrosepticum strain 1043 against phage phiM1 and phiA2, E.coli against some but not all coliphages and S.marcescens against some bacteriophages, causing an abortive infection (Abi phenotype). Also protects P.atrosepticum strain 1043 against phage phiTE; phage that escape Abi and grow in this bacterium have evolved a pseudo-ToxI RNA by expanding a pre-existing sequence similar to the bona fide ToxI repeats. The sequence is that of Endoribonuclease ToxN from Pectobacterium atrosepticum (Erwinia carotovora subsp. atroseptica).